Here is a 717-residue protein sequence, read N- to C-terminus: MTGPDIDDFENALNAFWHGRPPASLEDVMALYGVLAVAESGGELYGTDSKLEPFVDDGRLVTIDIDLTGETPNVSDPKVDTLRVEDVSKLRYAHKSSGRGAKYSLTQIGSKNGNDAEGVASTILGRVRSWTTQDSVRSVTGEDGHPDGWIVEELAAVFEKGSDTLEALEEAIKALLPPDESLPTVITVRLRLDAGRLSHGEESGPRWFWPAELDVLEEAMKRYATANAADKNVESGDGISEGESVGLVTDRVERVVGTPDNPIGVFSVKHPDAQPGLRQDQSWRNYPVGADTAMLFSKGQDLVETCVLRRGGVETYALPYFAGELTPLKAQSLYGAIQSLDRESDYDDSGGSPLARVTYELRESDDETLQELAKTELRFYTITLPIGDDKNVIAEEPAAPVYWVSELADALAQTVHGPTLNPERGGFAPYDNWSLLELATEDFEESRKFGFYRIVGHQFTDSAFAYRGDDEDDDFRRVVDHRLIAGVPLDASMLFDEYLRRYHDESEGGDLPPHQIVAQQLVHLETLSRAGLLNGLDVPIEPPTMTTETETETDFDTTSLPAIREHRLESFLDRPLFEAPARRAAALAGVLVGQVSWHQESERNVGRPLDAQTKGDQLTKNSLENALTSALEKAKVYALDSEYRSDRDMLFPETVDRLLETTEDMPSAWPIEKRELQFCYVLGHAHGRRSMPVAFDLHEKEDEDDQDTEEPAESTTN.

Disordered stretches follow at residues 263-283 and 698-717; these read IGVFSVKHPDAQPGLRQDQSW and HEKEDEDDQDTEEPAESTTN. The segment covering 701-717 has biased composition (acidic residues); sequence EDEDDQDTEEPAESTTN.

It is found in the cytoplasm. Its function is as follows. CRISPR (clustered regularly interspaced short palindromic repeat) is an adaptive immune system that provides protection against mobile genetic elements (viruses, transposable elements and conjugative plasmids). CRISPR clusters contain sequences complementary to antecedent mobile elements and target invading nucleic acids. CRISPR clusters are transcribed and processed into CRISPR RNA (crRNA). Plasmid targeted by CRISPR locus P1 transform wild-type cells very poorly. This subunit might be involved in stabilizing crRNA. The sequence is that of CRISPR-associated protein Cas8b from Haloferax volcanii (strain ATCC 29605 / DSM 3757 / JCM 8879 / NBRC 14742 / NCIMB 2012 / VKM B-1768 / DS2) (Halobacterium volcanii).